A 535-amino-acid polypeptide reads, in one-letter code: Putative transcription activator BRLF1 homolog (535 aa).

A disordered region spans residues 384 to 426 (KTNFPLKRKRQSRNIDPNTPRRPRGRPKGSKTKKRPTCSPALF). Basic residues predominate over residues 404-419 (RRPRGRPKGSKTKKRP).

Belongs to the herpesviridae TAF50 family.

In terms of biological role, transcription activation. Regulates the delayed-early 110 kDa promoter. This Saimiriine herpesvirus 2 (strain 11) (SaHV-2) protein is Putative transcription activator BRLF1 homolog (50).